The following is a 1221-amino-acid chain: DNA-directed RNA polymerase subunit beta (1221 aa).

The disordered stretch occupies residues 1176–1221 (EKKKLAEEEAEIAAEAEAEGSAEEDAAEADADANEAETADDDKASK). Residues 1183 to 1215 (EEAEIAAEAEAEGSAEEDAAEADADANEAETAD) are compositionally biased toward acidic residues.

This sequence belongs to the RNA polymerase beta chain family. As to quaternary structure, the RNAP catalytic core consists of 2 alpha, 1 beta, 1 beta' and 1 omega subunit. When a sigma factor is associated with the core the holoenzyme is formed, which can initiate transcription.

The enzyme catalyses RNA(n) + a ribonucleoside 5'-triphosphate = RNA(n+1) + diphosphate. Functionally, DNA-dependent RNA polymerase catalyzes the transcription of DNA into RNA using the four ribonucleoside triphosphates as substrates. This chain is DNA-directed RNA polymerase subunit beta, found in Lactobacillus delbrueckii subsp. bulgaricus (strain ATCC BAA-365 / Lb-18).